Reading from the N-terminus, the 843-residue chain is Potassium transporter 10 (843 aa).

The segment covering 1 to 15 (MKSPSPVDPESPSSP) has biased composition (low complexity). Positions 1–25 (MKSPSPVDPESPSSPDCKGGSSSKR) are disordered. Residues 1 to 34 (MKSPSPVDPESPSSPDCKGGSSSKRRRLPWRMTM) are Cytoplasmic-facing. Residues 35 to 55 (SLAYQSLGVVYGDLSTSPLYV) traverse the membrane as a helical segment. Residues 56 to 72 (YKAAFAEDIQHSETNEE) lie on the Vacuolar side of the membrane. A helical membrane pass occupies residues 73-93 (ILGVLSFVFWTLTLVPLLKYV). At 94–183 (CVVLRADDNG…LLERHKVLQR (90 aa)) the chain is on the cytoplasmic side. A helical membrane pass occupies residues 184–204 (VLLVLALVGTCMVIGDGVLTP). The Vacuolar portion of the chain corresponds to 205–225 (AISVFSAVSGLELSMEKHQHK). A helical membrane pass occupies residues 226 to 246 (YVEVPIACFVLVCLFCLQHYG). Over 247–249 (THR) the chain is Cytoplasmic. Residues 250-270 (VGFLFAPIVITWLLCISMIGV) form a helical membrane-spanning segment. The Vacuolar segment spans residues 271–298 (YNIVHWEPNVYRALSPYYMYKFLKKTQR). Residues 299 to 319 (GGWMSLGGILLCITGSEAMFA) form a helical membrane-spanning segment. Residues 320 to 326 (DLGHFNQ) lie on the Cytoplasmic side of the membrane. The helical transmembrane segment at 327-347 (LSIQIAFTCMVYPSLILAYMG) threads the bilayer. The Vacuolar portion of the chain corresponds to 348–377 (QAAYLCKHHIIESDYRIGFYVSVPEKIRWP). Residues 378 to 398 (VLAIAILAAVVGSQAVITGTF) form a helical membrane-spanning segment. At 399-425 (SMIKQCTALGCFPRVKIVHTSDKVHGQ) the chain is on the cytoplasmic side. The chain crosses the membrane as a helical span at residues 426-446 (IYIPEINWILMILCLAITIGF). Over 447–451 (RDTKH) the chain is Vacuolar. Residues 452–472 (LGNASGLAVITVMLVTTCLMS) traverse the membrane as a helical segment. At 473–482 (LVIVLCWHKS) the chain is on the cytoplasmic side. A helical membrane pass occupies residues 483–505 (IFLAFGFIIFFGTIEALYFSASL). Over 506 to 510 (IKFRE) the chain is Vacuolar. A helical membrane pass occupies residues 511 to 531 (GAWVPIVLAFIFMAIMCIWHY). Over 532 to 843 (GTIKKYEFDL…TLEVGMIYYV (312 aa)) the chain is Cytoplasmic. The tract at residues 667–747 (AASSKPKNVC…IMSPSPSPPP (81 aa)) is disordered. Residues 718-735 (GGSGSGSGRGSSRGGGGA) show a composition bias toward gly residues.

Belongs to the HAK/KUP transporter (TC 2.A.72.3) family. In terms of tissue distribution, expressed in roots, shoots, and panicle at flowering stage.

Its subcellular location is the vacuole membrane. Its function is as follows. High-affinity potassium transporter. This Oryza sativa subsp. japonica (Rice) protein is Potassium transporter 10 (HAK10).